Here is a 460-residue protein sequence, read N- to C-terminus: NADH-ubiquinone oxidoreductase chain 4 (460 aa).

13 helical membrane-spanning segments follow: residues 22–42 (WLWP…LLWF), 59–79 (IDPL…LMIL), 93–113 (QRIY…AFSA), 114–134 (TELI…LIII), 148–168 (TYFL…LLLM), 195–215 (FWWT…GVHL), 225–245 (PIAG…YGMM), 258–278 (MAYP…SICL), 286–306 (LIAY…MIQT), 310–330 (FAGA…LFCL), 351–371 (VMLP…LALP), 394–414 (ILLT…MFLM), and 440–460 (LHLI…GWTF).

It belongs to the complex I subunit 4 family.

It localises to the mitochondrion membrane. The catalysed reaction is a ubiquinone + NADH + 5 H(+)(in) = a ubiquinol + NAD(+) + 4 H(+)(out). Its function is as follows. Core subunit of the mitochondrial membrane respiratory chain NADH dehydrogenase (Complex I) that is believed to belong to the minimal assembly required for catalysis. Complex I functions in the transfer of electrons from NADH to the respiratory chain. The immediate electron acceptor for the enzyme is believed to be ubiquinone. The chain is NADH-ubiquinone oxidoreductase chain 4 (MT-ND4) from Squalus acanthias (Spiny dogfish).